A 670-amino-acid chain; its full sequence is Aurofusarin cluster transcription factor aurR2 (670 aa).

Positions 12–38 (CVPCQHRKIRCNGQTPCAYCIRTGKEC) form a DNA-binding region, zn(2)-C6 fungal-type. 2 disordered regions span residues 57–76 (RLTAAQTGSPSGDGQVIVSG) and 92–115 (GDEMQGKDVSPDPERPPLRTRTDT). The segment covering 92 to 113 (GDEMQGKDVSPDPERPPLRTRT) has biased composition (basic and acidic residues).

It localises to the nucleus. Functionally, transcription factor that may participate in the regulation of the expression of the gene cluster that mediates the biosynthesis of aurofusarin, a red mycelium pigment which is acting as a mycotoxin. This Gibberella zeae (strain ATCC MYA-4620 / CBS 123657 / FGSC 9075 / NRRL 31084 / PH-1) (Wheat head blight fungus) protein is Aurofusarin cluster transcription factor aurR2.